We begin with the raw amino-acid sequence, 335 residues long: MGPLSAPPCTEHIKWKGLLLTALLLNFWNLPTTAQVMIEAQPPKVSEGKDVLLLVHNLPQNLTGYIWYKGQIRDLYHYITSYVVDGQIIIYGPAYSGRETVYSNASLLIQNVTREDAGSYTLHIIKRGDGTRGVTGYFTFTLYLETPKPSISSSNLNPREAMETVILTCNPETPDASYLWWMNGQSLPMTHRMQLSETNRTLFLFGVTKYTAGPYECEIWNSGSASRSDPVTLNLLHGPDLPRIFPSVTSYYSGENLDLSCFANSNPPAQYSWTINGKFQLSGQKLFIPQITPKHNGLYACSARNSATGEESSTSLTIRVIAPPGLGTFAFNNPT.

The signal sequence occupies residues 1-34; that stretch reads MGPLSAPPCTEHIKWKGLLLTALLLNFWNLPTTA. One can recognise an Ig-like V-type domain in the interval 35-144; that stretch reads QVMIEAQPPK…TGYFTFTLYL (110 aa). Residues Asn-61, Asn-104, and Asn-111 are each glycosylated (N-linked (GlcNAc...) asparagine). A Cell attachment site motif is present at residues 127 to 129; the sequence is RGD. Ig-like C2-type domains follow at residues 147-234 and 242-317; these read PKPS…VTLN and PRIF…TSLT. 2 disulfides stabilise this stretch: Cys-169–Cys-217 and Cys-261–Cys-301.

The protein belongs to the immunoglobulin superfamily. CEA family.

It localises to the secreted. This chain is Pregnancy-specific beta-1-glycoprotein 11 (PSG11), found in Homo sapiens (Human).